A 252-amino-acid chain; its full sequence is Probable transcriptional regulatory protein all4276 (252 aa).

This sequence belongs to the TACO1 family.

The protein resides in the cytoplasm. This Nostoc sp. (strain PCC 7120 / SAG 25.82 / UTEX 2576) protein is Probable transcriptional regulatory protein all4276.